We begin with the raw amino-acid sequence, 312 residues long: Ribosomal protein L11 methyltransferase (312 aa).

4 residues coordinate S-adenosyl-L-methionine: threonine 162, glycine 183, aspartate 205, and asparagine 248.

The protein belongs to the methyltransferase superfamily. PrmA family.

It localises to the cytoplasm. The catalysed reaction is L-lysyl-[protein] + 3 S-adenosyl-L-methionine = N(6),N(6),N(6)-trimethyl-L-lysyl-[protein] + 3 S-adenosyl-L-homocysteine + 3 H(+). Its function is as follows. Methylates ribosomal protein L11. The protein is Ribosomal protein L11 methyltransferase of Bacillus anthracis (strain A0248).